The sequence spans 505 residues: Histidine ammonia-lyase (505 aa).

Residues 141-143 (ASG) constitute a cross-link (5-imidazolinone (Ala-Gly)). Serine 142 carries the 2,3-didehydroalanine (Ser) modification.

The protein belongs to the PAL/histidase family. Post-translationally, contains an active site 4-methylidene-imidazol-5-one (MIO), which is formed autocatalytically by cyclization and dehydration of residues Ala-Ser-Gly.

It localises to the cytoplasm. It catalyses the reaction L-histidine = trans-urocanate + NH4(+). It participates in amino-acid degradation; L-histidine degradation into L-glutamate; N-formimidoyl-L-glutamate from L-histidine: step 1/3. This is Histidine ammonia-lyase from Bacillus cereus (strain ZK / E33L).